We begin with the raw amino-acid sequence, 235 residues long: Myc target protein 1 (235 aa).

Residues 95 to 113 (RRRRASAPISQWSSSRRSR) carry the Bipartite nuclear localization signal motif. Phosphoserine occurs at positions 135, 138, 141, and 149.

It belongs to the MYCT1 family. Down-regulated in gastric cancer tissues.

The protein localises to the nucleus. In terms of biological role, may regulate certain MYC target genes, MYC seems to be a direct upstream transcriptional activator. Does not seem to significantly affect growth cell capacity. Overexpression seems to mediate many of the known phenotypic features associated with MYC, including promotion of apoptosis, alteration of morphology, enhancement of anchorage-independent growth, tumorigenic conversion, promotion of genomic instability, and inhibition of hematopoietic differentiation. The chain is Myc target protein 1 (MYCT1) from Homo sapiens (Human).